The sequence spans 483 residues: MADLLRKVKSIKKKQDQSNHQALILGKYEMGRLLGHGTFAKVYLARNAQSGESVAIKVIDKEKVLKSGLIAHIKREISILRRVRHPNIVQLFEVMATKSKIYFVMEYVKGGELFNKVAKGRLKEEMARKYFQQLISAVSFCHFRGVYHRDLKPENLLLDENGNLKVSDFGLSAVSDQIRQDGLFHTFCGTPAYVAPEVLARKGYDGAKVDIWSCGVILFVLMAGFLPFHDRNVMAMYKKIYRGDFRCPRWFPVEINRLLIRMLETKPERRFTMPDIMETSWFKKGFKHIKFYVEDDHQLCNVADDDEIESIESVSGRSSTVSEPEDFESFDGRRRGGSMPRPASLNAFDLISFSPGFDLSGLFEDDGEGSRFVSGAPVGQIISKLEEIARIVSFTVRKKDCKVSLEGSREGSMKGPLSIAAEIFELTPALVVVEVKKKGGDKMEYDEFCNKELKPKLQNLSSENGQRVSGSRSLPSFLLSDTD.

Positions 28–282 constitute a Protein kinase domain; that stretch reads YEMGRLLGHG…MPDIMETSWF (255 aa). Residues 34–42 and Lys-57 each bind ATP; that span reads LGHGTFAKV. The active-site Proton acceptor is Asp-150. Positions 168–197 are activation loop; it reads DFGLSAVSDQIRQDGLFHTFCGTPAYVAPE. Ser-172 is modified (phosphoserine). Thr-186 carries the post-translational modification Phosphothreonine. Positions 313 to 322 are enriched in polar residues; the sequence is SVSGRSSTVS. The disordered stretch occupies residues 313 to 338; that stretch reads SVSGRSSTVSEPEDFESFDGRRRGGS. In terms of domain architecture, NAF spans 340–364; that stretch reads PRPASLNAFDLISFSPGFDLSGLFE. The segment at 367–396 is PPI; sequence GEGSRFVSGAPVGQIISKLEEIARIVSFTV. Residues 459 to 483 form a disordered region; sequence NLSSENGQRVSGSRSLPSFLLSDTD.

This sequence belongs to the protein kinase superfamily. CAMK Ser/Thr protein kinase family. SNF1 subfamily. The cofactor is Mn(2+).

The catalysed reaction is L-seryl-[protein] + ATP = O-phospho-L-seryl-[protein] + ADP + H(+). The enzyme catalyses L-threonyl-[protein] + ATP = O-phospho-L-threonyl-[protein] + ADP + H(+). Functionally, CIPK serine-threonine protein kinases interact with CBL proteins. Binding of a CBL protein to the regulatory NAF domain of CIPK protein lead to the activation of the kinase in a calcium-dependent manner. This chain is CBL-interacting serine/threonine-protein kinase 19 (CIPK19), found in Arabidopsis thaliana (Mouse-ear cress).